The chain runs to 371 residues: Chaperone protein DnaJ (371 aa).

One can recognise a J domain in the interval 5–69; it reads DYYEVLGLSK…QKRAQYDQFG (65 aa). The CR-type zinc finger occupies 133–215; sequence GKELNVEIPV…CHGSGKVRKR (83 aa). Cysteine 146, cysteine 149, cysteine 163, cysteine 166, cysteine 189, cysteine 192, cysteine 203, and cysteine 206 together coordinate Zn(2+). 4 CXXCXGXG motif repeats span residues 146-153, 163-170, 189-196, and 203-210; these read CDTCKGSG, CKHCSGSG, CGHCSGTG, and CTTCHGSG.

Belongs to the DnaJ family. Homodimer. Requires Zn(2+) as cofactor.

Its subcellular location is the cytoplasm. In terms of biological role, participates actively in the response to hyperosmotic and heat shock by preventing the aggregation of stress-denatured proteins and by disaggregating proteins, also in an autonomous, DnaK-independent fashion. Unfolded proteins bind initially to DnaJ; upon interaction with the DnaJ-bound protein, DnaK hydrolyzes its bound ATP, resulting in the formation of a stable complex. GrpE releases ADP from DnaK; ATP binding to DnaK triggers the release of the substrate protein, thus completing the reaction cycle. Several rounds of ATP-dependent interactions between DnaJ, DnaK and GrpE are required for fully efficient folding. Also involved, together with DnaK and GrpE, in the DNA replication of plasmids through activation of initiation proteins. The chain is Chaperone protein DnaJ from Bacillus cereus (strain G9842).